The sequence spans 1096 residues: MAEGAASREAPAPLDVAGGEDDPRAGADAASGDAAPEASGGRMRDRRSGVALPGNAGVPADSEAGLLEAARATPRRTSIIKDPSNQKCGGRKKTVSFSSMPSEKKISSAHDCISFMQAGCELKKVRPNSRIYNRFFTLDTDLQALRWEPSKKDLEKAKLDISAIKEIRLGKNTETFRNNGLADQICEDCAFSILHGENYESLDLVANSADVANIWVSGLRYLVSRSKQPLDFMEGNQNTPRFMWLKTVFEAADVDGNGIMLEDTSVELIKQLNPTLKESKIRLKFKEIQKSKEKLTTRVTEEEFCEAFCELCTRPEVYFLLVQISKNKEYLDANDLMLFLEVEQGVTHVTEDMCLDIIRRYELSEDGRQKGFLAIDGFTQYLLSPECDIFDPEQKKVAQDMTQPLSHYYINASHNTYLIEDQFRGPADINGYVRALKMGCRSIELDVSDGPDNEPILCNRNNMAMLLSFRSVLEVINKFAFVASEYPLILCLGNHCSLPQQRVMVQQMKKVFGNKLYTEAPLSSESYLPSPEKLKHMIIVKGKKLPSESDLLEGEVTDEDEEAEMSRRVSGDYNGEQKHIWLCRELSDLVSICKSVQYRDFELSMKTQNYWEICSFSETLASRIANEYPEDFVNYNKKFLSRVYPSAMRIDSSNLNPQDFWNCGCQIVAMNFQTPGPMMDLHTGWFLQNGGCGYVLRPSIMRDEVSYFSANTKGIVPGVSPLLLHIKIISGQNFPKPKGACAKGDVIDPYVCVEIHGIPADCSEQRTKTVQQNSDNPIFDETFEFQVNLPELTMVRFVILDDDYIGDEFIGQYTIPFECLQPGYRHVPLRSFVGDIMEHVTLFVHIAITNRSGGGKAQKRSLSVRMGKKVREYTMLRNIGLKTIDDIFKIAVHPLREAIDMRENMQNAIVSVKELCGLPPIASLKQCLLTLSSRLITSDSTPSVSLVMKDCFPYLEPLGTIPDVQKRMLAAYDLMIQESRVLIEMADTVQEKIVQCQKAGMEFHEELHNLGAKEGLKGRKLNKAIESFAWNITVLKGQGDLLKNAKNEAVENIKQIQLACLSCGLSKGPGSAAEAKGKRSLEAIEEKESSEENGKL.

A disordered region spans residues 1-101 (MAEGAASREA…KKTVSFSSMP (101 aa)). The span at 26 to 41 (GADAASGDAAPEASGG) shows a compositional bias: low complexity. 2 positions are modified to phosphoserine: serine 48 and serine 78. Positions 83–222 (PSNQKCGGRK…NIWVSGLRYL (140 aa)) are interaction with PPP1C. At threonine 94 the chain carries Phosphothreonine. The residue at position 96 (serine 96) is a Phosphoserine. The PH domain maps to 114–224 (SFMQAGCELK…WVSGLRYLVS (111 aa)). Residues 399–543 (QDMTQPLSHY…LKHMIIVKGK (145 aa)) form the PI-PLC X-box domain. The interval 544 to 568 (KLPSESDLLEGEVTDEDEEAEMSRR) is interaction with GABA A beta subunit. Threonine 557 carries the phosphothreonine modification. Position 570 is a phosphoserine (serine 570). One can recognise a PI-PLC Y-box domain in the interval 586–702 (LSDLVSICKS…GYVLRPSIMR (117 aa)). Positions 702–831 (RDEVSYFSAN…PGYRHVPLRS (130 aa)) constitute a C2 domain. The stretch at 1040 to 1060 (DLLKNAKNEAVENIKQIQLAC) forms a coiled coil. The disordered stretch occupies residues 1067–1096 (KGPGSAAEAKGKRSLEAIEEKESSEENGKL). Over residues 1075-1096 (AKGKRSLEAIEEKESSEENGKL) the composition is skewed to basic and acidic residues. The residue at position 1080 (serine 1080) is a Phosphoserine.

The protein belongs to the PRIP family. Interacts with PPP2CA, GABA receptor beta subunits, GABA receptor gamma-2 subunits. Interacts with Ins(1,4,5)P3, Ins(1,4,5,6)P4, GABARAP, and PPP1C. May form a ternary complex with GABA receptor beta subunit and GABARAP. The formation of a ternary complex with GABA receptor beta subunit and GABARAP could be the key step for facilitating the association of GABARAP with the GABA receptor gamma-2 subunit and to allow it to be transported at the right destination. In terms of processing, phosphorylation of Thr-94 resulted in dissociation of PPP1C from PRIP1. In vitro, phosphorylated by the catalytic subunit of PKA. In terms of tissue distribution, expressed in brain. Found in the granular cell and Purkinje cell layers in the cerebellum; and in the hippocampal pyramidal cells, dentate granule cells and pyramidal granule cells of the cerebral cortex in the cerebrum.

It is found in the cytoplasm. Its function is as follows. Involved in an inositol phospholipid-based intracellular signaling cascade. Shows no PLC activity to phosphatidylinositol 4,5-bisphosphate and phosphatidylinositol. Component in the phospho-dependent endocytosis process of GABA A receptor. Acts as an inhibitor of PPP1C. This chain is Inactive phospholipase C-like protein 1 (Plcl1), found in Rattus norvegicus (Rat).